A 512-amino-acid chain; its full sequence is Bifunctional purine biosynthesis protein PurH (512 aa).

An MGS-like domain is found at 1 to 150 (MIGEERVVRA…KNFPAVLVLV (150 aa)).

This sequence belongs to the PurH family.

The enzyme catalyses (6R)-10-formyltetrahydrofolate + 5-amino-1-(5-phospho-beta-D-ribosyl)imidazole-4-carboxamide = 5-formamido-1-(5-phospho-D-ribosyl)imidazole-4-carboxamide + (6S)-5,6,7,8-tetrahydrofolate. It catalyses the reaction IMP + H2O = 5-formamido-1-(5-phospho-D-ribosyl)imidazole-4-carboxamide. It participates in purine metabolism; IMP biosynthesis via de novo pathway; 5-formamido-1-(5-phospho-D-ribosyl)imidazole-4-carboxamide from 5-amino-1-(5-phospho-D-ribosyl)imidazole-4-carboxamide (10-formyl THF route): step 1/1. It functions in the pathway purine metabolism; IMP biosynthesis via de novo pathway; IMP from 5-formamido-1-(5-phospho-D-ribosyl)imidazole-4-carboxamide: step 1/1. The chain is Bifunctional purine biosynthesis protein PurH from Chloroflexus aurantiacus (strain ATCC 29366 / DSM 635 / J-10-fl).